A 271-amino-acid chain; its full sequence is Eukaryotic translation initiation factor 3 subunit G (271 aa).

Disordered stretches follow at residues 1-29 and 143-185; these read MPAL…SEVI and KPTK…MRGR. The 79-residue stretch at 189–267 folds into the RRM domain; it reads SAIRISNLSE…LILSVEWSKP (79 aa).

The protein belongs to the eIF-3 subunit G family. As to quaternary structure, component of the eukaryotic translation initiation factor 3 (eIF-3) complex.

The protein resides in the cytoplasm. Its function is as follows. RNA-binding component of the eukaryotic translation initiation factor 3 (eIF-3) complex, which is involved in protein synthesis of a specialized repertoire of mRNAs and, together with other initiation factors, stimulates binding of mRNA and methionyl-tRNAi to the 40S ribosome. The eIF-3 complex specifically targets and initiates translation of a subset of mRNAs involved in cell proliferation. This subunit can bind 18S rRNA. The chain is Eukaryotic translation initiation factor 3 subunit G from Anopheles gambiae (African malaria mosquito).